Consider the following 296-residue polypeptide: tRNA dimethylallyltransferase (296 aa).

An ATP-binding site is contributed by 8–15 (GPTGSGKT). Residue 10 to 15 (TGSGKT) participates in substrate binding. The interval 32-35 (DSRQ) is interaction with substrate tRNA.

This sequence belongs to the IPP transferase family. Monomer. Requires Mg(2+) as cofactor.

It catalyses the reaction adenosine(37) in tRNA + dimethylallyl diphosphate = N(6)-dimethylallyladenosine(37) in tRNA + diphosphate. Its function is as follows. Catalyzes the transfer of a dimethylallyl group onto the adenine at position 37 in tRNAs that read codons beginning with uridine, leading to the formation of N6-(dimethylallyl)adenosine (i(6)A). This is tRNA dimethylallyltransferase from Leptospira biflexa serovar Patoc (strain Patoc 1 / Ames).